A 144-amino-acid chain; its full sequence is Acylphosphatase-like protein MJ1331 (144 aa).

The Acylphosphatase-like domain occupies 8–100 (TYELRIYGNV…FPNGLNKIST (93 aa)).

The polypeptide is Acylphosphatase-like protein MJ1331 (Methanocaldococcus jannaschii (strain ATCC 43067 / DSM 2661 / JAL-1 / JCM 10045 / NBRC 100440) (Methanococcus jannaschii)).